A 374-amino-acid chain; its full sequence is Pectinesterase (374 aa).

An N-terminal signal peptide occupies residues 1-31 (MVKLLNSTRELSINALSMLNSFGDMVAQATG). 2 N-linked (GlcNAc...) asparagine glycosylation sites follow: Asn58 and Asn124. Thr133 and Gln163 together coordinate substrate. Asp186 functions as the Proton donor in the catalytic mechanism. Cys200 and Cys220 are oxidised to a cystine. The active-site Nucleophile is Asp207. Asn230 carries N-linked (GlcNAc...) asparagine glycosylation. Residues Arg275 and Trp277 each coordinate substrate. An N-linked (GlcNAc...) asparagine glycan is attached at Asn303.

The protein belongs to the pectinesterase family. In terms of tissue distribution, pollen, and at much lower levels in pistils and petals.

The protein resides in the secreted. The protein localises to the cell wall. The catalysed reaction is [(1-&gt;4)-alpha-D-galacturonosyl methyl ester](n) + n H2O = [(1-&gt;4)-alpha-D-galacturonosyl](n) + n methanol + n H(+). The protein operates within glycan metabolism; pectin degradation; 2-dehydro-3-deoxy-D-gluconate from pectin: step 1/5. Functionally, may play a role in pollen germination and/or tube growth. In Petunia integrifolia (Violet-flowered petunia), this protein is Pectinesterase (PPE1).